The following is a 208-amino-acid chain: Large ribosomal subunit protein uL4 (208 aa).

The disordered stretch occupies residues 44–79 (QRQGTHKSKERSEISGSTRKLGRQKGGGGARRGDIN).

Belongs to the universal ribosomal protein uL4 family. Part of the 50S ribosomal subunit.

Functionally, one of the primary rRNA binding proteins, this protein initially binds near the 5'-end of the 23S rRNA. It is important during the early stages of 50S assembly. It makes multiple contacts with different domains of the 23S rRNA in the assembled 50S subunit and ribosome. In terms of biological role, forms part of the polypeptide exit tunnel. This chain is Large ribosomal subunit protein uL4, found in Phocaeicola vulgatus (strain ATCC 8482 / DSM 1447 / JCM 5826 / CCUG 4940 / NBRC 14291 / NCTC 11154) (Bacteroides vulgatus).